Reading from the N-terminus, the 607-residue chain is Thymidine kinase (607 aa).

2 disordered regions span residues 1 to 160 (MAGF…ADST) and 180 to 215 (DDKS…PSGL). Residues 17–32 (KCQEDESPENERHENF) show a composition bias toward basic and acidic residues. Polar residues-rich tracts occupy residues 88-106 (AAVT…TSCP), 148-160 (RKTS…ADST), and 194-203 (RRPSSHSALK). 291-298 (GAPGVGKT) serves as a coordination point for ATP. Residue E317 is the Proton acceptor of the active site. Position 355 (Q355) interacts with substrate. R445 lines the ATP pocket. R451 serves as a coordination point for substrate.

This sequence belongs to the herpesviridae thymidine kinase family. As to quaternary structure, homodimer.

The protein localises to the virion tegument. It is found in the host nucleus. The catalysed reaction is thymidine + ATP = dTMP + ADP + H(+). Its function is as follows. Catalyzes the transfer of the gamma-phospho group of ATP to thymidine to generate dTMP in the salvage pathway of pyrimidine synthesis. The dTMP serves as a substrate for DNA polymerase during viral DNA replication. Allows the virus to be reactivated and to grow in non-proliferative cells lacking a high concentration of phosphorylated nucleic acid precursors. This is Thymidine kinase from Homo sapiens (Human).